Consider the following 78-residue polypeptide: Metallothionein-like protein type 2 (78 aa).

Belongs to the metallothionein superfamily. Type 15 family.

Functionally, metallothioneins have a high content of cysteine residues that bind various heavy metals. The polypeptide is Metallothionein-like protein type 2 (Actinidia deliciosa (Kiwi)).